The following is a 127-amino-acid chain: Glycine cleavage system H protein (127 aa).

The Lipoyl-binding domain maps to 22–104 (EAVIGITQFA…YTDGWMVRVK (83 aa)). K63 bears the N6-lipoyllysine mark.

It belongs to the GcvH family. The glycine cleavage system is composed of four proteins: P, T, L and H. The cofactor is (R)-lipoate.

The glycine cleavage system catalyzes the degradation of glycine. The H protein shuttles the methylamine group of glycine from the P protein to the T protein. The chain is Glycine cleavage system H protein from Nitratidesulfovibrio vulgaris (strain DSM 19637 / Miyazaki F) (Desulfovibrio vulgaris).